A 306-amino-acid chain; its full sequence is MELKDYYAIMGVKPTDDLKTIKTAYRRLARKYHPDVSKEPDAEARFKEVAEAWEVLSDEQRRAEYDQLWQHRNDPQFNRQFQQHEGQPYNAEDFDDIFSSIFGQHGRHSHHRHAARGHDIEIEVAVFLEETLEEHQRTISYSVPVYNAFGLVEREIPKTLNVKIPAGVSNGQRIRLKGQGTPGENGGPNGDLWLVIHIAPHPLFDIVNQDLEVVLPLAPWEAALGAKVSVPTLKERILLTIPPGSQAGQRLRIKGKGLASKKHTGDLYAIIKIVMPPKPDEKTAALWQQLADAQSSFDPRQQWGKA.

Positions 5–69 (DYYAIMGVKP…QRRAEYDQLW (65 aa)) constitute a J domain.

It is found in the cytoplasm. It localises to the nucleoid. Functionally, DNA-binding protein that preferentially recognizes a curved DNA sequence. It is probably a functional analog of DnaJ; displays overlapping activities with DnaJ, but functions under different conditions, probably acting as a molecular chaperone in an adaptive response to environmental stresses other than heat shock. Lacks autonomous chaperone activity; binds native substrates and targets them for recognition by DnaK. Its activity is inhibited by the binding of CbpM. This Salmonella paratyphi A (strain ATCC 9150 / SARB42) protein is Curved DNA-binding protein.